Consider the following 116-residue polypeptide: Iron-sulfur cluster insertion protein ErpA (116 aa).

Residues C44, C108, and C110 each coordinate iron-sulfur cluster.

This sequence belongs to the HesB/IscA family. In terms of assembly, homodimer. The cofactor is iron-sulfur cluster.

Functionally, required for insertion of 4Fe-4S clusters for at least IspG. The chain is Iron-sulfur cluster insertion protein ErpA from Shewanella putrefaciens (strain CN-32 / ATCC BAA-453).